The primary structure comprises 190 residues: MRVIGIDPGTAIVGYGIIDYDKNKYSIVDYGVVLTSKDLSTEERLEIVYDEIDKILKKYKPEFMAIEDLFYFKNNKTVISVAQARGVILLAGKQNNIAMTSYTPLQVKIGITGYGKAEKKQIQQMVQKFLGLSEIPKPDDAADALAICITHINSLGSKLSFGRTNNLNKIVVPSGTNKISLEEYKNLLKK.

Active-site residues include Asp-7, Glu-67, and Asp-140. 3 residues coordinate Mg(2+): Asp-7, Glu-67, and Asp-140.

This sequence belongs to the RuvC family. In terms of assembly, homodimer which binds Holliday junction (HJ) DNA. The HJ becomes 2-fold symmetrical on binding to RuvC with unstacked arms; it has a different conformation from HJ DNA in complex with RuvA. In the full resolvosome a probable DNA-RuvA(4)-RuvB(12)-RuvC(2) complex forms which resolves the HJ. The cofactor is Mg(2+).

It localises to the cytoplasm. The enzyme catalyses Endonucleolytic cleavage at a junction such as a reciprocal single-stranded crossover between two homologous DNA duplexes (Holliday junction).. In terms of biological role, the RuvA-RuvB-RuvC complex processes Holliday junction (HJ) DNA during genetic recombination and DNA repair. Endonuclease that resolves HJ intermediates. Cleaves cruciform DNA by making single-stranded nicks across the HJ at symmetrical positions within the homologous arms, yielding a 5'-phosphate and a 3'-hydroxyl group; requires a central core of homology in the junction. The consensus cleavage sequence is 5'-(A/T)TT(C/G)-3'. Cleavage occurs on the 3'-side of the TT dinucleotide at the point of strand exchange. HJ branch migration catalyzed by RuvA-RuvB allows RuvC to scan DNA until it finds its consensus sequence, where it cleaves and resolves the cruciform DNA. The chain is Crossover junction endodeoxyribonuclease RuvC from Fusobacterium nucleatum subsp. nucleatum (strain ATCC 25586 / DSM 15643 / BCRC 10681 / CIP 101130 / JCM 8532 / KCTC 2640 / LMG 13131 / VPI 4355).